A 388-amino-acid polypeptide reads, in one-letter code: Probable proton-coupled zinc antiporter SLC30A3 (388 aa).

Polar residues predominate over residues 1–13; sequence MEPSPTTGGSETT. Disordered stretches follow at residues 1-30 and 35-54; these read MEPS…GLRL and TEAP…SFHH. Over 1–75 the chain is Cytoplasmic; sequence MEPSPTTGGS…TPERMQAQRQ (75 aa). The helical transmembrane segment at 76-96 threads the bilayer; that stretch reads LCTACAVCCVFMAGEVVGGYL. Topologically, residues 97-105 are lumenal; that stretch reads AHSLAIMTD. The helical transmembrane segment at 106–126 threads the bilayer; the sequence is AAHLLADVGSMMGSLFSLWLS. Positions 108 and 112 each coordinate Zn(2+). The Cytoplasmic segment spans residues 127-145; sequence TRPATRTMTFGWHRSETLG. Residues 146-166 form a helical membrane-spanning segment; sequence ALASVVSLWMVTGILLYLAFI. Topologically, residues 167–177 are lumenal; sequence RLLHSDYHIEG. A helical membrane pass occupies residues 178–198; that stretch reads GAMLLTASIAVCANLLMAFVL. The Cytoplasmic segment spans residues 199–235; the sequence is HQAGPPHSHGSRGAEYAPLEEGSGEPLPLGNTSVRAA. Residues 236 to 256 form a helical membrane-spanning segment; the sequence is FVHVLGDLLQSLGVLIASILI. Residues His238 and Asp242 each coordinate Zn(2+). The Lumenal portion of the chain corresponds to 257-264; the sequence is YFKPQYKA. Residues 265–285 traverse the membrane as a helical segment; the sequence is ADPISTFLFSICALGSTAPTL. Residues 286–388 are Cytoplasmic-facing; that stretch reads RDVLRVLMEG…CLRCQEPPQA (103 aa).

This sequence belongs to the cation diffusion facilitator (CDF) transporter (TC 2.A.4) family. SLC30A subfamily. As to quaternary structure, homodimer. Homodimerization could regulate efficiency of zinc transport. Interacts with TMEM163.

The protein resides in the cytoplasmic vesicle. It is found in the secretory vesicle. Its subcellular location is the synaptic vesicle membrane. The protein localises to the synapse. It localises to the synaptosome. The protein resides in the late endosome membrane. It is found in the lysosome membrane. It catalyses the reaction Zn(2+)(in) + 2 H(+)(out) = Zn(2+)(out) + 2 H(+)(in). Functionally, probable proton-coupled zinc ion antiporter mediating the import of zinc from cytoplasm into synaptic vesicles and participating to cellular zinc ion homeostasis in the brain. In Bos taurus (Bovine), this protein is Probable proton-coupled zinc antiporter SLC30A3.